A 934-amino-acid polypeptide reads, in one-letter code: DNA topoisomerase 1 (934 aa).

Positions 1–20 (MADPKTKGRGSGGNGSGRRL) are disordered. The Toprim domain maps to 18 to 142 (RRLVIVESPT…VKRMVFHEIT (125 aa)). Residues Glu24 and Asp111 each coordinate Mg(2+). Residues 157–616 (DIDLVDAQET…FYFGGDHGVP (460 aa)) enclose the Topo IA-type catalytic domain. The interaction with DNA stretch occupies residues 191–196 (SAGRVQ). Catalysis depends on Tyr342, which acts as the O-(5'-phospho-DNA)-tyrosine intermediate. Disordered stretches follow at residues 746–765 (AAQG…RTGS), 842–892 (KRRG…KGDD), and 905–934 (LADR…AKRD). A compositionally biased stretch (basic residues) spans 911–934 (RGPAKRPARKAARKVPAKKAAKRD).

It belongs to the type IA topoisomerase family. In terms of assembly, monomer. Mg(2+) serves as cofactor.

The catalysed reaction is ATP-independent breakage of single-stranded DNA, followed by passage and rejoining.. Releases the supercoiling and torsional tension of DNA, which is introduced during the DNA replication and transcription, by transiently cleaving and rejoining one strand of the DNA duplex. Introduces a single-strand break via transesterification at a target site in duplex DNA. The scissile phosphodiester is attacked by the catalytic tyrosine of the enzyme, resulting in the formation of a DNA-(5'-phosphotyrosyl)-enzyme intermediate and the expulsion of a 3'-OH DNA strand. The free DNA strand then undergoes passage around the unbroken strand, thus removing DNA supercoils. Finally, in the religation step, the DNA 3'-OH attacks the covalent intermediate to expel the active-site tyrosine and restore the DNA phosphodiester backbone. The chain is DNA topoisomerase 1 from Mycobacterium bovis (strain ATCC BAA-935 / AF2122/97).